A 407-amino-acid chain; its full sequence is Nicotinate phosphoribosyltransferase (407 aa).

Residue histidine 224 is modified to Phosphohistidine; by autocatalysis.

It belongs to the NAPRTase family. Transiently phosphorylated on a His residue during the reaction cycle. Phosphorylation strongly increases the affinity for substrates and increases the rate of nicotinate D-ribonucleotide production. Dephosphorylation regenerates the low-affinity form of the enzyme, leading to product release.

The enzyme catalyses nicotinate + 5-phospho-alpha-D-ribose 1-diphosphate + ATP + H2O = nicotinate beta-D-ribonucleotide + ADP + phosphate + diphosphate. Its pathway is cofactor biosynthesis; NAD(+) biosynthesis; nicotinate D-ribonucleotide from nicotinate: step 1/1. Catalyzes the synthesis of beta-nicotinate D-ribonucleotide from nicotinate and 5-phospho-D-ribose 1-phosphate at the expense of ATP. The sequence is that of Nicotinate phosphoribosyltransferase from Pseudomonas syringae pv. tomato (strain ATCC BAA-871 / DC3000).